Consider the following 323-residue polypeptide: MFARQTFRCAQPLRQSFRKYSTEAPKAKSLAPIYTAVGLTGLSVGLYRYYYGAGATAEAPVERAKVFTGGDQGWVDLKLSEIEVLSHNTKRLRFEFEDKEAVSGVTIASALLTKFKPVGAEKAVLRPYTPTSDEDQPGYLDLVVKVYPNGPMSEHLHSMNVDQRLSFKGPLPKYQWETNKHEHIALIAGGTGITPMYQLIRQIFKNPDDKTKVTLVYGNVTEDDILLKKELQDLENTYPQRFKAFYLLDKPPKEWTGGKGYINKELLKTVLPEPKEENQKIFVCGPPGLYNAVSGNKVSPKDQGELSGILKELGYNKDQVYKF.

Residues 30–46 (LAPIYTAVGLTGLSVGL) form a helical membrane-spanning segment. The region spanning 72 to 177 (QGWVDLKLSE…KGPLPKYQWE (106 aa)) is the FAD-binding FR-type domain. 180-215 (KHEHIALIAGGTGITPMYQLIRQIFKNPDDKTKVTL) contributes to the FAD binding site.

Belongs to the flavoprotein pyridine nucleotide cytochrome reductase family. Requires FAD as cofactor.

The protein resides in the mitochondrion outer membrane. It catalyses the reaction 2 Fe(III)-[cytochrome b5] + NADH = 2 Fe(II)-[cytochrome b5] + NAD(+) + H(+). Its function is as follows. May mediate the reduction of outer membrane cytochrome b5. This Aspergillus oryzae (strain ATCC 42149 / RIB 40) (Yellow koji mold) protein is NADH-cytochrome b5 reductase 2 (mcr1).